The following is a 197-amino-acid chain: MKILAMDERREELSAKSTVQNVKISEAPILDGKVNNEDSHMEIDQPEGSMEEDDHRQVKEKNTSENSVEQKRGRRMFGALLGTLGKFQQESEREQKSARKVKRAELEEKLAKRREQELQELEKQEKIEAEILESRLQEQRKVALDELELDRNDLKKVLDNKKSYYLRTKTQPSLFYRPYYLLPSQRTQLEQMKSEAP.

Residues 30 to 73 form a disordered region; sequence LDGKVNNEDSHMEIDQPEGSMEEDDHRQVKEKNTSENSVEQKRG. 2 stretches are compositionally biased toward basic and acidic residues: residues 34–43 and 53–71; these read VNNEDSHMEI and DDHR…VEQK.

This sequence belongs to the pinin family.

The protein resides in the nucleus. The protein localises to the cytoplasm. Transcriptional activator that may participate in the regulation of mRNA splicing. The polypeptide is Pinin homolog 1 (pnn1) (Schizosaccharomyces pombe (strain 972 / ATCC 24843) (Fission yeast)).